Reading from the N-terminus, the 224-residue chain is Pyridoxine/pyridoxamine 5'-phosphate oxidase (224 aa).

FMN is bound by residues 69 to 74, 83 to 84, Arg89, Lys90, and Gln112; these read RHVLLK and FT. Residue Lys74 coordinates substrate. Substrate-binding residues include Tyr130, Arg134, and Ser138. FMN is bound by residues 148 to 149 and Trp194; that span reads QS. 200 to 202 serves as a coordination point for substrate; it reads RMH. Arg204 is an FMN binding site.

This sequence belongs to the pyridoxamine 5'-phosphate oxidase family. As to quaternary structure, homodimer. FMN serves as cofactor.

It carries out the reaction pyridoxamine 5'-phosphate + O2 + H2O = pyridoxal 5'-phosphate + H2O2 + NH4(+). The enzyme catalyses pyridoxine 5'-phosphate + O2 = pyridoxal 5'-phosphate + H2O2. It participates in cofactor metabolism; pyridoxal 5'-phosphate salvage; pyridoxal 5'-phosphate from pyridoxamine 5'-phosphate: step 1/1. Its pathway is cofactor metabolism; pyridoxal 5'-phosphate salvage; pyridoxal 5'-phosphate from pyridoxine 5'-phosphate: step 1/1. Its function is as follows. Catalyzes the oxidation of either pyridoxine 5'-phosphate (PNP) or pyridoxamine 5'-phosphate (PMP) into pyridoxal 5'-phosphate (PLP). The polypeptide is Pyridoxine/pyridoxamine 5'-phosphate oxidase (Acidothermus cellulolyticus (strain ATCC 43068 / DSM 8971 / 11B)).